We begin with the raw amino-acid sequence, 64 residues long: Toxin Tce3 (64 aa).

Residues 1–62 (KDGYIIEHRG…IFDSNNNKCS (62 aa)) form the LCN-type CS-alpha/beta domain. Intrachain disulfides connect Cys-11–Cys-61, Cys-15–Cys-37, Cys-23–Cys-42, and Cys-27–Cys-44.

This sequence belongs to the long (4 C-C) scorpion toxin superfamily. Sodium channel inhibitor family. Beta subfamily. Expressed by the venom gland.

Its subcellular location is the secreted. Its function is as follows. Inhibits the sodium (Nav) currents in an apparent irreversible manner. Produces small depolarization and induces repetitive firing in squid axons. Is specific for arthropods (crickets, triatomides, crabs and squids), but is non-toxic to mice. Shows antibacterial activity against both Gram-positive and Gram-negative bacteria. In Tityus cerroazul (Scorpion), this protein is Toxin Tce3.